We begin with the raw amino-acid sequence, 212 residues long: Adenylate kinase (212 aa).

10 to 15 provides a ligand contact to ATP; that stretch reads GAGKGT. The NMP stretch occupies residues 30–59; the sequence is STGDMFRAAMANQTEMGVLAKSYIDKGELV. Residues T31, R36, 57 to 59, 86 to 89, and Q93 each bind AMP; these read ELV and GYPR. Positions 127-159 are LID; it reads GRIIHRQTGETFHKVFNPPANYNEEDYYQREDD. ATP contacts are provided by residues R128 and 137–138; that span reads TF. AMP-binding residues include R156 and R167. Q195 lines the ATP pocket.

The protein belongs to the adenylate kinase family. In terms of assembly, monomer.

The protein resides in the cytoplasm. It carries out the reaction AMP + ATP = 2 ADP. The protein operates within purine metabolism; AMP biosynthesis via salvage pathway; AMP from ADP: step 1/1. Catalyzes the reversible transfer of the terminal phosphate group between ATP and AMP. Plays an important role in cellular energy homeostasis and in adenine nucleotide metabolism. The polypeptide is Adenylate kinase (Streptococcus gordonii (strain Challis / ATCC 35105 / BCRC 15272 / CH1 / DL1 / V288)).